The primary structure comprises 281 residues: Arabinose operon regulatory protein (281 aa).

The alpha-L-arabinopyanose site is built by Pro-8, Thr-24, Arg-38, Tyr-82, and His-93. Residues 180–279 (RDACQYISDH…GASPSEFRAG (100 aa)) enclose the HTH araC/xylS-type domain. 2 consecutive DNA-binding regions (H-T-H motif) follow at residues 198–219 (ASVA…RQQL) and 246–269 (IATV…KKCT).

In terms of assembly, homodimer.

The protein resides in the cytoplasm. Transcription factor that regulates the expression of several genes involved in the transport and metabolism of L-arabinose. This chain is Arabinose operon regulatory protein, found in Salmonella typhimurium (strain LT2 / SGSC1412 / ATCC 700720).